An 819-amino-acid chain; its full sequence is ATP-dependent DNA helicase PIF4 (819 aa).

A mitochondrion-targeting transit peptide spans 1-84 (MLLNSTRTLL…RQASSAGHND (84 aa)). The segment at 76-101 (QASSAGHNDLGLQEKEKSSGDESAFS) is disordered. An ATP-binding site is contributed by 126 to 133 (GGAGVGKS). A DNA-binding region spans residues 734-754 (HIIYVAASRVKKFSQLRMINV).

Belongs to the helicase family. PIF1 subfamily. As to quaternary structure, monomer. Mg(2+) is required as a cofactor.

The protein resides in the mitochondrion matrix. It localises to the kinetoplast. It carries out the reaction Couples ATP hydrolysis with the unwinding of duplex DNA at the replication fork by translocating in the 5'-3' direction. This creates two antiparallel DNA single strands (ssDNA). The leading ssDNA polymer is the template for DNA polymerase III holoenzyme which synthesizes a continuous strand.. The enzyme catalyses ATP + H2O = ADP + phosphate + H(+). Its function is as follows. DNA-dependent ATPase and 5'-3' DNA helicase required for the maintenance of mitochondrial (kinetoplast) genome stability. This chain is ATP-dependent DNA helicase PIF4, found in Trypanosoma brucei brucei (strain 927/4 GUTat10.1).